We begin with the raw amino-acid sequence, 301 residues long: 1,5-anhydro-D-fructose reductase (301 aa).

Residue Asp35 participates in NADP(+) binding. The active-site Proton donor is Tyr40. Position 102 (His102) interacts with substrate. Residues Gln175 and 246 to 258 (IPKS…IREN) contribute to the NADP(+) site.

This sequence belongs to the aldo/keto reductase family. Monomer.

It localises to the cytoplasm. It catalyses the reaction 1,5-anhydro-D-glucitol + NADP(+) = 1,5-anhydro-D-fructose + NADPH + H(+). Its activity is regulated as follows. Inhibited by p-chloromercuribenzoic acid and alkyliodines. Functionally, catalyzes the NADPH-dependent reduction of 1,5-anhydro-D-fructose (AF) to 1,5-anhydro-D-glucitol. The sequence is that of 1,5-anhydro-D-fructose reductase (Akr1e2) from Mus musculus (Mouse).